An 814-amino-acid polypeptide reads, in one-letter code: Ubiquitin carboxyl-terminal hydrolase 45 (814 aa).

Residues 1 to 14 (MRVKDPTKALPEKA) are compositionally biased toward basic and acidic residues. The segment at 1–28 (MRVKDPTKALPEKAKRSKRPTVPHDEDS) is disordered. Residues 1–62 (MRVKDPTKAL…AIAENLWSVC (62 aa)) are interaction with ERCC1. A phosphoserine mark is found at S28 and S29. Residues 36–153 (LTCQHVSHAI…AQIVDFLQKH (118 aa)) form a UBP-type zinc finger. Zn(2+)-binding residues include C38, H40, C62, C65, C85, C88, C93, H101, H105, H114, C127, and C130. The USP domain occupies 190–813 (RGITNLGNTC…QAYLLFYERV (624 aa)). The Nucleophile role is filled by C199. Disordered regions lie at residues 418 to 443 (IENI…IHDR) and 479 to 533 (ESRL…PDGP). Basic and acidic residues predominate over residues 432-443 (SSKDKSQLIHDR). 2 positions are modified to phosphoserine: S508 and S526. The span at 515 to 527 (KQTGLFRSSSGSG) shows a compositional bias: polar residues. H746 serves as the catalytic Proton acceptor.

It belongs to the peptidase C19 family. As to quaternary structure, interacts with ERCC1. The catalytically active form interacts with SPDL1. Widely expressed. High expression is detected in the cerebellum. In the eye, it is expressed at high levels in the optic nerve, sclera and retina, with relatively low levels in the choroid, lens and retinal pigment epithelium.

It localises to the photoreceptor inner segment. It is found in the cytoplasm. Its subcellular location is the nucleus. It catalyses the reaction Thiol-dependent hydrolysis of ester, thioester, amide, peptide and isopeptide bonds formed by the C-terminal Gly of ubiquitin (a 76-residue protein attached to proteins as an intracellular targeting signal).. Its function is as follows. Catalyzes the deubiquitination of SPDL1. Plays a role in the repair of UV-induced DNA damage via deubiquitination of ERCC1, promoting its recruitment to DNA damage sites. May be involved in the maintenance of photoreceptor function. May play a role in normal retinal development. Plays a role in cell migration. This is Ubiquitin carboxyl-terminal hydrolase 45 (USP45) from Homo sapiens (Human).